The primary structure comprises 512 residues: Choline-sulfatase (512 aa).

Ca(2+) is bound by residues Asp-14, Gln-15, and Cys-54. The active-site Nucleophile is the Cys-54. Position 54 is a 3-oxoalanine (Cys) (Cys-54). His-104 is an active-site residue. The Ca(2+) site is built by Asp-296 and His-297.

The protein belongs to the sulfatase family. The cofactor is Ca(2+). The conversion to 3-oxoalanine (also known as C-formylglycine, FGly), of a serine or cysteine residue in prokaryotes and of a cysteine residue in eukaryotes, is critical for catalytic activity.

The catalysed reaction is choline sulfate + H2O = choline + sulfate + H(+). It participates in amine and polyamine biosynthesis; choline biosynthesis; choline from choline sulfate: step 1/1. Converts choline-O-sulfate into choline. This chain is Choline-sulfatase (betC), found in Rhizobium meliloti (strain 1021) (Ensifer meliloti).